The following is a 466-amino-acid chain: DNA polymerase delta subunit 3 (466 aa).

Position 2 is an N-acetylalanine (Ala2). Disordered stretches follow at residues 169–188 (NNELTTNGHGPPASKQVSQQ) and 199–232 (KAAAKTQETNKETKTEAKEVTNASAAGNKAPGKG). Residues 206 to 217 (ETNKETKTEAKE) are compositionally biased toward basic and acidic residues. Lys258 is covalently cross-linked (Glycyl lysine isopeptide (Lys-Gly) (interchain with G-Cter in SUMO); alternate). Lys258 is covalently cross-linked (Glycyl lysine isopeptide (Lys-Gly) (interchain with G-Cter in SUMO2); alternate). A Glycyl lysine isopeptide (Lys-Gly) (interchain with G-Cter in SUMO2) cross-link involves residue Lys261. Disordered stretches follow at residues 274–393 (KLAT…KTYL) and 406–466 (ESES…FQRK). At Thr277 the chain carries Phosphothreonine. Basic and acidic residues predominate over residues 286–296 (KKAEPVKVLQK). Ser307 carries the phosphoserine modification. Pro residues predominate over residues 349-361 (PSPPPPPSPPLEP). Phosphoserine occurs at positions 407 and 409. Thr411 bears the Phosphothreonine mark. Ser413 carries the phosphoserine modification. Basic and acidic residues predominate over residues 432-441 (VKKEPREERK). Lys433 participates in a covalent cross-link: Glycyl lysine isopeptide (Lys-Gly) (interchain with G-Cter in SUMO); alternate. A Glycyl lysine isopeptide (Lys-Gly) (interchain with G-Cter in SUMO2); alternate cross-link involves residue Lys433. Positions 455-466 (RQVSITGFFQRK) are enriched in polar residues. The short motif at 456–463 (QVSITGFF) is the PIP-box element. At Ser458 the chain carries Phosphoserine.

In terms of assembly, component of both the DNA polymerase delta and DNA polymerase zeta complexes. The tetrameric DNA polymerase delta complex (Pol-delta4), which consists of POLD1/p125, POLD2/p50, POLD3/p66/p68 and POLD4/p12, with POLD1 bearing DNA polymerase and 3' to 5' proofreading exonuclease activities. Within this complex, directly interacts with POLD2. Following stress caused by DNA damaging agents or by replication stress, POLD4 is degraded and Pol-delta4 is converted into a trimeric form of the complex (Pol-delta3), which consists of POLD1, POLD2 and POLD3. Pol-delta3 is the major form occurring at S phase replication sites, as well as DNA damage sites. Directly interacts with PCNA, as do POLD1 and POLD4; this interaction stimulates Pol-delta polymerase activity. POLD3 phosphorylation at Ser-458 impairs PCNA binding. Component of the DNA polymerase zeta complex (POLZ), which consists of REV3L, MAD2L2, POLD2 and POLD3, with REV3L bearing DNA polymerase catalytic activity. The DNA polymerase delta complex interacts with POLDIP2; this interaction is probably mediated through direct binding to POLD2. Ubiquitinated, but not targeted to the proteasome. Sumoylated. Sumoylation with SUMO3 may be predominant. In terms of processing, phosphorylation at Ser-458 is catalyzed in vitro by PKA. It is thought to decrease the affinity for PCNA and Pol-delta4 processivity. Can also be phosphorylated in vitro by CDK1-cyclin-A complex, as well as CDK2-cyclin-A and CDK2-cyclin-E complexes. PCNA interferes with CDK-cyclin phosphorylation.

Its subcellular location is the cytoplasm. The protein resides in the nucleus. In terms of biological role, accessory component of both the DNA polymerase delta complex and the DNA polymerase zeta complex. As a component of the trimeric and tetrameric DNA polymerase delta complexes (Pol-delta3 and Pol-delta4, respectively), plays a role in high fidelity genome replication, including in lagging strand synthesis, and repair. Required for optimal Pol-delta activity. Stabilizes the Pol-delta complex and plays a major role in Pol-delta stimulation by PCNA. Pol-delta3 and Pol-delta4 are characterized by the absence or the presence of POLD4. They exhibit differences in catalytic activity. Most notably, Pol-delta3 shows higher proofreading activity than Pol-delta4. Although both Pol-delta3 and Pol-delta4 process Okazaki fragments in vitro, Pol-delta3 may also be better suited to fulfill this task, exhibiting near-absence of strand displacement activity compared to Pol-delta4 and stalling on encounter with the 5'-blocking oligonucleotides. Pol-delta3 idling process may avoid the formation of a gap, while maintaining a nick that can be readily ligated. Along with DNA polymerase kappa, DNA polymerase delta carries out approximately half of nucleotide excision repair (NER) synthesis following UV irradiation. In this context, POLD3, along with PCNA and RFC1-replication factor C complex, is required to recruit POLD1, the catalytic subunit of the polymerase delta complex, to DNA damage sites. Under conditions of DNA replication stress, required for the repair of broken replication forks through break-induced replication (BIR). Involved in the translesion synthesis (TLS) of templates carrying O6-methylguanine or abasic sites performed by Pol-delta4, independently of DNA polymerase zeta (REV3L) or eta (POLH). Facilitates abasic site bypass by DNA polymerase delta by promoting extension from the nucleotide inserted opposite the lesion. Also involved in TLS, as a component of the tetrameric DNA polymerase zeta complex. Along with POLD2, dramatically increases the efficiency and processivity of DNA synthesis of the DNA polymerase zeta complex compared to the minimal zeta complex, consisting of only REV3L and REV7. This is DNA polymerase delta subunit 3 (POLD3) from Homo sapiens (Human).